We begin with the raw amino-acid sequence, 134 residues long: MTLNLCVLTPNRIIWDSEVKEIILSTNSGQIGVLPNHAPIATAVDIGILRIRLNDQWLTMALMGGFARIGNNEITILVNDAERGSDIDPQEAQRTLEIAEASLSRAEGKRQEIEANLALRRARTRVEAINVISY.

It belongs to the ATPase epsilon chain family. In terms of assembly, F-type ATPases have 2 components, CF(1) - the catalytic core - and CF(0) - the membrane proton channel. CF(1) has five subunits: alpha(3), beta(3), gamma(1), delta(1), epsilon(1). CF(0) has three main subunits: a, b and c.

The protein resides in the plastid. The protein localises to the chloroplast thylakoid membrane. Functionally, produces ATP from ADP in the presence of a proton gradient across the membrane. The sequence is that of ATP synthase epsilon chain, chloroplastic from Drimys granadensis.